A 174-amino-acid polypeptide reads, in one-letter code: Adipose-secreted signaling protein (174 aa).

Residue alanine 2 is modified to N-acetylalanine. Position 147 is a phosphothreonine (threonine 147).

This sequence belongs to the ADISSP family.

It is found in the secreted. Functionally, adipocyte-secreted protein (adipokine) that acts as a key regulator for white adipose tissue (WAT) thermogenesis and glucose homeostasis at least in part through activation of protein kinase A (PKA). This Homo sapiens (Human) protein is Adipose-secreted signaling protein.